The chain runs to 337 residues: ATP-dependent 6-phosphofructokinase (337 aa).

ATP is bound at residue Gly-11. 21–25 serves as a coordination point for ADP; the sequence is RAVVR. ATP-binding positions include 72 to 73 and 102 to 105; these read RY and GDGS. Asp-103 provides a ligand contact to Mg(2+). Substrate is bound at residue 125-127; sequence TID. Asp-127 serves as the catalytic Proton acceptor. Arg-154 contributes to the ADP binding site. Substrate is bound by residues Arg-162 and 169-171; that span reads MGR. ADP contacts are provided by residues 185–187, Lys-212, and 214–216; these read GAD and KNH. Residues Glu-223, Arg-245, and 251 to 254 contribute to the substrate site; that span reads HILR.

It belongs to the phosphofructokinase type A (PFKA) family. ATP-dependent PFK group I subfamily. Prokaryotic clade 'B1' sub-subfamily. In terms of assembly, homotetramer. It depends on Mg(2+) as a cofactor.

Its subcellular location is the cytoplasm. It carries out the reaction beta-D-fructose 6-phosphate + ATP = beta-D-fructose 1,6-bisphosphate + ADP + H(+). The protein operates within carbohydrate degradation; glycolysis; D-glyceraldehyde 3-phosphate and glycerone phosphate from D-glucose: step 3/4. Allosterically activated by ADP and other diphosphonucleosides, and allosterically inhibited by phosphoenolpyruvate. Catalyzes the phosphorylation of D-fructose 6-phosphate to fructose 1,6-bisphosphate by ATP, the first committing step of glycolysis. The protein is ATP-dependent 6-phosphofructokinase of Streptococcus pyogenes serotype M1.